The following is a 225-amino-acid chain: Polyadenylate-binding protein 2 (225 aa).

Residues 1 to 36 show a composition bias toward acidic residues; sequence MADEDISLNEDQLLESMEETNGEQETEIVTETEEEG. Residues 1–42 form a disordered region; sequence MADEDISLNEDQLLESMEETNGEQETEIVTETEEEGSMQIDP. A coiled-coil region spans residues 14-74; that stretch reads LESMEETNGE…QSEVDKQMAG (61 aa). Positions 96–173 constitute an RRM domain; sequence RSVYVGNVDY…RQIKVMSKRT (78 aa).

It localises to the nucleus. The protein resides in the cytoplasm. Involved in the 3'-end formation of mRNA precursors (pre-mRNA) by the addition of a poly(A) tail of 200-250 nt to the upstream cleavage product. Stimulates poly(A) polymerase (PAPOLA) conferring processivity on the poly(A) tail elongation reaction and also controls the poly(A) tail length. Increases the affinity of poly(A) polymerase for RNA. Binds to poly(A) and to poly(G) with high affinity. May protect the poly(A) tail from degradation. This chain is Polyadenylate-binding protein 2, found in Drosophila pseudoobscura pseudoobscura (Fruit fly).